The primary structure comprises 1180 residues: Nonsense-mediated mRNA decay factor SMG7 (1180 aa).

2 TPR repeats span residues 151–184 (QHCLVHLGDIARYRNQTSQAESYYRHAAQLVPSN) and 186–218 (QPYNQLAILASSKGDHLTTIFYYCRSIAVKFPF). Disordered regions lie at residues 496–636 (PQEK…TQTT), 692–795 (QTAS…SYMQ), 893–913 (CSDQENMPRGPPYEDNKSSPL), 1019–1127 (SLFE…WAAQ), and 1148–1180 (SSMMQPGPSALEQLLMQQKQKQQRGHGNMNPPH). Positions 504–520 (LQESSNGEQTPNESTHG) are enriched in polar residues. Basic and acidic residues-rich tracts occupy residues 547-559 (ENIKPREQSREQN), 584-606 (NEQKKEGKRKSEVKKNSHDKTTD), and 615-627 (TELRKTPVSEARK). Over residues 692 to 718 (QTASHPQSANPVQTGKPSHIPYSQQRP) the composition is skewed to polar residues. The span at 728–740 (PPQPQQTQPPPPQ) shows a compositional bias: pro residues. The segment covering 741 to 778 (TSQQALQQSVQLQLQQQQQQQQQQQQQQQQSPTKQSSQ) has biased composition (low complexity). The segment covering 1026 to 1038 (WSPSLPASSDHST) has biased composition (polar residues). Positions 1039-1065 (PASQSPHSSNPSSLPSSPPTHSHGSMP) are enriched in low complexity. The segment covering 1076-1090 (DSRDRRANDRWKAEK) has biased composition (basic and acidic residues). Polar residues predominate over residues 1103–1125 (SASTSSVPETNSWHQGAPTSTWA).

Its subcellular location is the cytoplasm. It localises to the nucleus. Functionally, plays a role in nonsense-mediated mRNA decay. Recruits UPF1 to cytoplasmic mRNA decay bodies. Together with SMG5 is thought to provide a link to the mRNA degradation machinery involving exonucleolytic pathways, and to serve as an adapter for UPF1 to protein phosphatase 2A (PP2A), thereby triggering UPF1 dephosphorylation. Required for normal embryonic development. This is Nonsense-mediated mRNA decay factor SMG7 from Danio rerio (Zebrafish).